A 429-amino-acid polypeptide reads, in one-letter code: Trigger factor (429 aa).

Residues 162-247 form the PPIase FKBP-type domain; the sequence is DDTVDLAFEG…INAIKKLRQP (86 aa).

The protein belongs to the FKBP-type PPIase family. Tig subfamily.

It is found in the cytoplasm. The catalysed reaction is [protein]-peptidylproline (omega=180) = [protein]-peptidylproline (omega=0). Functionally, involved in protein export. Acts as a chaperone by maintaining the newly synthesized protein in an open conformation. Functions as a peptidyl-prolyl cis-trans isomerase. The sequence is that of Trigger factor from Fusobacterium nucleatum subsp. nucleatum (strain ATCC 25586 / DSM 15643 / BCRC 10681 / CIP 101130 / JCM 8532 / KCTC 2640 / LMG 13131 / VPI 4355).